Consider the following 487-residue polypeptide: Transcriptional adapter ADA2b (487 aa).

Over residues 1 to 13 the composition is skewed to polar residues; that stretch reads MGRSRGNFQNFED. A disordered region spans residues 1–25; sequence MGRSRGNFQNFEDPTQRTRKKKNAA. Residues 42 to 98 form a ZZ-type zinc finger; that stretch reads GGKYNCDYCQKDITGKIRIKCAVCPDFDLCIECMSVGAEITPHKCDHPYRVMGNLTF. Positions 47, 50, 62, 65, 71, 74, 84, and 88 each coordinate Zn(2+). One can recognise an SANT domain in the interval 100 to 152; the sequence is LICPDWSADDEMLLLEGLEIYGLGNWAEVAEHVGTKSKEQCLEHYRNIYLNSP. At K216 the chain carries N6-acetyllysine; by GCN5. The segment covering 368-383 has biased composition (basic and acidic residues); sequence RKRKRENEEGMNRGKE. Positions 368 to 388 are disordered; sequence RKRKRENEEGMNRGKESGQFG. The 87-residue stretch at 401–487 folds into the SWIRM domain; sequence QASSSYVNDL…MLVKKGIAQL (87 aa).

In terms of assembly, interacts in vitro with the HAT domain of GCN5 and with the DNA-binding domain of the transcriptional activator DREB1B/CBF1. Interacts with BZIP11. In terms of processing, acetylated in vitro by GCN5, but acetylation is not essential for biological activity. Expressed in roots, leaves, stems, flowers and siliques, with the strongest activity in the meristematic zones.

Its subcellular location is the nucleus. Required for the function of some acidic activation domains, which activate transcription from a distant site. The exact mechanism of action is not yet known. ADA2 stimulates the acetyltransferase activity of GCN5 on free histones or nucleosomes, probably by opening up the promoter region. Mediates auxin and cytokinin signals in the control of cell proliferation and might be involved in repression of a freezing tolerance pathway at warm temperature. Involved in the positive regulation of salt-induced gene expression by maintaining locus-specific acetylation of histones H4 and H3. The sequence is that of Transcriptional adapter ADA2b (ADA2B) from Arabidopsis thaliana (Mouse-ear cress).